A 149-amino-acid chain; its full sequence is Ribonuclease pancreatic (149 aa).

The N-terminal stretch at 1–25 is a signal peptide; it reads MGLENSLILFSLLVLVLGWVQPSLG. The tract at residues 25 to 62 is disordered; it reads GKESSPDKFKRQHMDTEGSSKSSPTYCNQMRSPQEMTK. Residues 28–42 show a composition bias toward basic and acidic residues; that stretch reads SSPDKFKRQHMDTEG. 2 residues coordinate substrate: lysine 32 and arginine 35. Residue histidine 37 is the Proton acceptor of the active site. A compositionally biased stretch (polar residues) spans 43–61; that stretch reads SSKSSPTYCNQMRSPQEMT. 4 disulfide bridges follow: cysteine 51-cysteine 109, cysteine 65-cysteine 120, cysteine 83-cysteine 135, and cysteine 90-cysteine 97. Residues 66-70 and lysine 91 each bind substrate; that span reads KPVNT. Histidine 144 functions as the Proton donor in the catalytic mechanism.

The protein belongs to the pancreatic ribonuclease family. As to quaternary structure, monomer. Interacts with and forms tight 1:1 complexes with RNH1. Dimerization of two such complexes may occur. Interaction with RNH1 inhibits this protein.

It localises to the secreted. The enzyme catalyses an [RNA] containing cytidine + H2O = an [RNA]-3'-cytidine-3'-phosphate + a 5'-hydroxy-ribonucleotide-3'-[RNA].. The catalysed reaction is an [RNA] containing uridine + H2O = an [RNA]-3'-uridine-3'-phosphate + a 5'-hydroxy-ribonucleotide-3'-[RNA].. Its function is as follows. Endonuclease that catalyzes the cleavage of RNA on the 3' side of pyrimidine nucleotides. Acts on single-stranded and double-stranded RNA. The sequence is that of Ribonuclease pancreatic (RNASE1) from Sundamys muelleri (Mueller's giant sunda rat).